The sequence spans 206 residues: Large ribosomal subunit protein uL4 (206 aa).

Residues 47–94 (NRAQKGRAEVSKSTRKPWRQKGTGRARAGMASSPLWRGGGRVFPNSPE) are disordered. A compositionally biased stretch (basic residues) spans 59 to 70 (STRKPWRQKGTG).

This sequence belongs to the universal ribosomal protein uL4 family. Part of the 50S ribosomal subunit.

Its function is as follows. One of the primary rRNA binding proteins, this protein initially binds near the 5'-end of the 23S rRNA. It is important during the early stages of 50S assembly. It makes multiple contacts with different domains of the 23S rRNA in the assembled 50S subunit and ribosome. Forms part of the polypeptide exit tunnel. This chain is Large ribosomal subunit protein uL4, found in Aromatoleum aromaticum (strain DSM 19018 / LMG 30748 / EbN1) (Azoarcus sp. (strain EbN1)).